Here is a 341-residue protein sequence, read N- to C-terminus: 4-amino-5-hydroxymethyl-2-methylpyrimidine phosphate synthase (341 aa).

K62 is modified (N6-(pyridoxal phosphate)lysine). H66 is an active-site residue. A pyridoxal 5'-phosphate-binding site is contributed by 115–118 (GEFG). The CCCFC; essential for catalytic activity, may be the site of iron coordination motif lies at 195–199 (CCCFC).

It belongs to the NMT1/THI5 family. As to quaternary structure, homodimer. It depends on Fe cation as a cofactor.

The enzyme catalyses N(6)-(pyridoxal phosphate)-L-lysyl-[4-amino-5-hydroxymethyl-2-methylpyrimidine phosphate synthase] + L-histidyl-[4-amino-5-hydroxymethyl-2-methylpyrimidine phosphate synthase] + 2 Fe(3+) + 4 H2O = L-lysyl-[4-amino-5-hydroxymethyl-2-methylpyrimidine phosphate synthase] + (2S)-2-amino-5-hydroxy-4-oxopentanoyl-[4-amino-5-hydroxymethyl-2-methylpyrimidine phosphate synthase] + 4-amino-2-methyl-5-(phosphooxymethyl)pyrimidine + 3-oxopropanoate + 2 Fe(2+) + 2 H(+). It participates in cofactor biosynthesis; thiamine diphosphate biosynthesis. Its function is as follows. Responsible for the formation of the pyrimidine heterocycle in the thiamine biosynthesis pathway. Catalyzes the formation of hydroxymethylpyrimidine phosphate (HMP-P) from histidine and pyridoxal phosphate (PLP). The protein uses PLP and the active site histidine to form HMP-P, generating an inactive enzyme. The enzyme can only undergo a single turnover, which suggests it is a suicide enzyme. The sequence is that of 4-amino-5-hydroxymethyl-2-methylpyrimidine phosphate synthase from Uromyces fabae (Rust fungus).